A 404-amino-acid chain; its full sequence is MALSLPLGPRLGSEPLNHPPGAPREADIVGCTVCPASGEESTSPEQAQTLGQDSLGPPEHFQGGPRGNEPAAHPPRWSTPSSYEDPAGGKHCEHPISGLEVLEAEQNSLHLCLLGLGRRLQDLEQGLGHWALAQSGMVQLQALQVDLRGAAERVEALLAFGEGLAQRSEPRAWAALEQILRALGAYRDSIFRRLWQLQAQLVSYSLVFEEANTLDQDLEVEGDSDWPGPGGVWGPWAPSSLPTSTELEWDPAGDIGGLGPLGQKTARTLGVPCELCGQRGPQGRGQGLEEADTSHSRQDMLESGLGHQKRLARHQRHSLLRKPQDKKRQASPHLQDVRLEGNPGAPDPASRQPLTFLLILFLLFLLLVGAMFLLPASGGPCCSHARIPRTPYLVLSYVNGLPPV.

2 disordered regions span residues 1-91 (MALS…GGKH) and 277-347 (GQRG…GAPD). Residues 1-355 (MALSLPLGPR…PDPASRQPLT (355 aa)) lie on the Cytoplasmic side of the membrane. Residues 39-52 (EESTSPEQAQTLGQ) are compositionally biased toward polar residues. Over residues 307–320 (HQKRLARHQRHSLL) the composition is skewed to basic residues. Residues 347–404 (DPASRQPLTFLLILFLLFLLLVGAMFLLPASGGPCCSHARIPRTPYLVLSYVNGLPPV) enclose the KASH domain. The chain crosses the membrane as a helical; Anchor for type IV membrane protein span at residues 356–376 (FLLILFLLFLLLVGAMFLLPA). Residues 377–404 (SGGPCCSHARIPRTPYLVLSYVNGLPPV) are Perinuclear space-facing.

Belongs to the nesprin family. As to quaternary structure, core component of LINC complexes which are composed of inner nuclear membrane SUN domain-containing proteins coupled to outer nuclear membrane KASH domain-containing nesprins. SUN and KASH domain-containing proteins seem to bind each other promiscuously; however, differentially expression of LINC complex constituents can give rise to specific assemblies. Probably part of a SUN1-containing LINC complex. Interacts with kinesins KIF5B and KLC1. Post-translationally, the disulfid bond with SUN1 or SUN2 is required for stability of the respective LINC complex under tensile forces.

It is found in the nucleus outer membrane. Functionally, as a component of the LINC (LInker of Nucleoskeleton and Cytoskeleton) complex, involved in the connection between the nuclear lamina and the cytoskeleton. The nucleocytoplasmic interactions established by the LINC complex play an important role in the transmission of mechanical forces across the nuclear envelope and in nuclear movement and positioning. Behaves as a kinesin cargo, providing a functional binding site for kinesin-1 at the nuclear envelope. Hence may contribute to the establishment of secretory epithelial morphology by promoting kinesin-dependent apical migration of the centrosome and Golgi apparatus and basal localization of the nucleus. The protein is Nesprin-4 (SYNE4) of Homo sapiens (Human).